We begin with the raw amino-acid sequence, 124 residues long: MLLLVIPILQIALENLLLFRQNCLLVVGKYHELDRILSSPSLIRVSPLFSFRFYLVNHELFPIPYQHSLGVLYLLVPLPHSRVTCFSLYTICYRIVLIWAKKKKSLIISDTAKYILAWLRKVLL.

A helical membrane pass occupies residues 83 to 100; the sequence is VTCFSLYTICYRIVLIWA.

It is found in the membrane. This is an uncharacterized protein from Saccharomyces cerevisiae (strain ATCC 204508 / S288c) (Baker's yeast).